Reading from the N-terminus, the 750-residue chain is MDRIAQQYRNGKRDNNGNRMASSAISEKGHIQVNQTRTPGQMPVYRGETINLSNLPQNQIKPCKDLDDVNIRRNNSNRHSKILLLDLCAGPNTNSFLGNTNAKDITVLSLPLPSTLVKRSNYPFENLLKNYLGSDEKYIEFTKIIKDYDIFIFSDSFSRISSCLKTTFCLIEKFKKFICHFFPSPYLKFFLLEGSLNDSKAPSLGKNKKNCILPKLDLNLNVNLTSRSTLNLRINIPPPNDSNKIFLQSLKKDLIHYSPNSLQKFFQFNMPADLAPNDTILPNWLKFCSVKENEKVILKKLFNNFETLENFEMQRLEKCLKFKKKPLHQKQLSQKQRGPQSTDDSKLYSLTSLQRQYKSSLKSNIQKNQKLKLIIPKNNTSSSPSPLSSDDTIMSPINDYELTEGIQSFTKNRYSNILPYEHSRVKLPHSPKPPAVSEASTTETKTDKSYPMCPVDAKNHSCKPNDYINANYLKLTQINPDFKYIATQAPLPSTMDDFWKVITLNKVKVIISLNSDDELNLRKWDIYWNNLSYSNHTIKLQNTWENICNINGCVLRVFQVKKTAPQNDNISQDCDLPHNGDLTSITMAVSEPFIVYQLQYKNWLDSCGVDMNDIIKLHKVKNSLLFNPQSFITSLEKDVCKPDLIDDNNSELHLDTANSSPLLVHCSAGCGRTGVFVTLDFLLSILSPTTNHSNKIDVWNMTQDLIFIIVNELRKQRISMVQNLTQYIACYEALLNYFALQKQIKNALPC.

The disordered stretch occupies residues 1–20 (MDRIAQQYRNGKRDNNGNRM). S258 is subject to Phosphoserine. Disordered regions lie at residues 327-348 (LHQK…SKLY) and 425-450 (VKLP…DKSY). The span at 330–348 (KQLSQKQRGPQSTDDSKLY) shows a compositional bias: polar residues. The region spanning 383-737 (SPSPLSSDDT…IACYEALLNY (355 aa)) is the Tyrosine-protein phosphatase domain. Phosphoserine is present on S430. C666 (phosphocysteine intermediate) is an active-site residue.

It belongs to the protein-tyrosine phosphatase family. Non-receptor class subfamily. Interacts with HOG1.

Its subcellular location is the cytoplasm. It is found in the nucleus. It catalyses the reaction O-phospho-L-tyrosyl-[protein] + H2O = L-tyrosyl-[protein] + phosphate. Major phosphatase responsible with PTP3 for tyrosine dephosphorylation of MAP kinase HOG1 to inactivate its activity. May also be involved in the regulation of MAP kinase FUS3. May be implicated in the ubiquitin-mediated protein degradation. The chain is Tyrosine-protein phosphatase 2 (PTP2) from Saccharomyces cerevisiae (strain ATCC 204508 / S288c) (Baker's yeast).